The chain runs to 430 residues: Enolase (430 aa).

A (2R)-2-phosphoglycerate-binding site is contributed by Q163. E205 functions as the Proton donor in the catalytic mechanism. Mg(2+) contacts are provided by D242, E287, and D314. Residues K339, R368, S369, and K390 each coordinate (2R)-2-phosphoglycerate. K339 (proton acceptor) is an active-site residue.

The protein belongs to the enolase family. Requires Mg(2+) as cofactor.

It is found in the cytoplasm. It localises to the secreted. The protein resides in the cell surface. The catalysed reaction is (2R)-2-phosphoglycerate = phosphoenolpyruvate + H2O. It functions in the pathway carbohydrate degradation; glycolysis; pyruvate from D-glyceraldehyde 3-phosphate: step 4/5. In terms of biological role, catalyzes the reversible conversion of 2-phosphoglycerate (2-PG) into phosphoenolpyruvate (PEP). It is essential for the degradation of carbohydrates via glycolysis. This Listeria innocua serovar 6a (strain ATCC BAA-680 / CLIP 11262) protein is Enolase.